The sequence spans 132 residues: Small ribosomal subunit protein uS8 (132 aa).

It belongs to the universal ribosomal protein uS8 family. In terms of assembly, part of the 30S ribosomal subunit. Contacts proteins S5 and S12.

Its function is as follows. One of the primary rRNA binding proteins, it binds directly to 16S rRNA central domain where it helps coordinate assembly of the platform of the 30S subunit. This Lactococcus lactis subsp. lactis (strain IL1403) (Streptococcus lactis) protein is Small ribosomal subunit protein uS8.